The sequence spans 455 residues: SVGFKAGVKDYKLTYYTPDYKTKDTDILAAFRVTPQPGVPPEEAGAAVAAESSTGTWTTVWTDGLTSLDRYKGRCYHIEPVAGEESQFIAYVAYPLDLFEEGSVTNMFTSIVGNVFGFKALRALRLEDLRIPNAYVKTFQGPPHGIQVERDKLNKYGRPLLGCTIKPKLGLSAKNYGRAVYECLRGGLDFTKDDENVNSQPFMRWRDRFLFCAEALYKAQAETGEIKGHYLNATAGTCEEMIKRAVFARELGVPIVMHDYLTGGFTANTSLSHYCRDNGLLLHIHRAMHAVIDRQKNHGMHFRVLAKALRLSGGDHIHSGTVVGKLEGEREITLGFVDLLRDDFVEKDRSRGIYFTQDWVSLPGVLPVASGGIHVWHMPALTEIFGDDSVLQFGGGTLGHPWGNAPGAVANRVALEACVQARNEGRDLASEGNQIIREASKWSPELAAACEVWKE.

K5 carries the post-translational modification N6,N6,N6-trimethyllysine. Substrate contacts are provided by N114 and T164. The Proton acceptor role is filled by K166. K168 lines the substrate pocket. Mg(2+) contacts are provided by K192, D194, and E195. Residue K192 is modified to N6-carboxylysine. The Proton acceptor role is filled by H285. The substrate site is built by R286, H318, and S370.

It belongs to the RuBisCO large chain family. Type I subfamily. In terms of assembly, heterohexadecamer of 8 large chains and 8 small chains; disulfide-linked. The disulfide link is formed within the large subunit homodimers. Requires Mg(2+) as cofactor. The disulfide bond which can form in the large chain dimeric partners within the hexadecamer appears to be associated with oxidative stress and protein turnover.

The protein resides in the plastid. It is found in the chloroplast. The catalysed reaction is 2 (2R)-3-phosphoglycerate + 2 H(+) = D-ribulose 1,5-bisphosphate + CO2 + H2O. It catalyses the reaction D-ribulose 1,5-bisphosphate + O2 = 2-phosphoglycolate + (2R)-3-phosphoglycerate + 2 H(+). In terms of biological role, ruBisCO catalyzes two reactions: the carboxylation of D-ribulose 1,5-bisphosphate, the primary event in carbon dioxide fixation, as well as the oxidative fragmentation of the pentose substrate in the photorespiration process. Both reactions occur simultaneously and in competition at the same active site. The sequence is that of Ribulose bisphosphate carboxylase large chain from Lupinus luteus (European yellow lupine).